Here is a 637-residue protein sequence, read N- to C-terminus: Protein kinase domain-containing protein ppk3 (637 aa).

The Protein kinase domain maps to 1 to 296 (MDFIKSAASF…QLLSSKLEVI (296 aa)). Residues 414–450 (KTLNNELLRSLAVVQNDQHPTLRTNSTICLGKIAEYL) form an HEAT repeat. Basic and acidic residues predominate over residues 576–586 (NDTTEIKEKKN). The interval 576 to 637 (NDTTEIKEKK…ENNVEESWGL (62 aa)) is disordered. Over residues 608 to 631 (ETEEQIDESWMENWNDEEETENNV) the composition is skewed to acidic residues.

It localises to the golgi apparatus. This chain is Protein kinase domain-containing protein ppk3 (ppk3), found in Schizosaccharomyces pombe (strain 972 / ATCC 24843) (Fission yeast).